We begin with the raw amino-acid sequence, 207 residues long: ATP-dependent Clp protease proteolytic subunit (207 aa).

Positions 1–14 (MSYSGERDNLAPHM) are excised as a propeptide. S111 functions as the Nucleophile in the catalytic mechanism. The active site involves H136.

It belongs to the peptidase S14 family. Fourteen ClpP subunits assemble into 2 heptameric rings which stack back to back to give a disk-like structure with a central cavity, resembling the structure of eukaryotic proteasomes. Component of the ClpAP and ClpXP complexes.

The protein resides in the cytoplasm. The catalysed reaction is Hydrolysis of proteins to small peptides in the presence of ATP and magnesium. alpha-casein is the usual test substrate. In the absence of ATP, only oligopeptides shorter than five residues are hydrolyzed (such as succinyl-Leu-Tyr-|-NHMec, and Leu-Tyr-Leu-|-Tyr-Trp, in which cleavage of the -Tyr-|-Leu- and -Tyr-|-Trp bonds also occurs).. Functionally, cleaves peptides in various proteins in a process that requires ATP hydrolysis. Has a chymotrypsin-like activity. Plays a major role in the degradation of misfolded proteins. This Salmonella paratyphi A (strain ATCC 9150 / SARB42) protein is ATP-dependent Clp protease proteolytic subunit.